A 149-amino-acid polypeptide reads, in one-letter code: F420H(2)-dependent quinone reductase MT1299 (149 aa).

Coenzyme F420-(gamma-Glu)n is bound by residues 48–50 (AKT), 54–59 (RTTSLT), 70–73 (VASK), 81–85 (GWYHN), and Y130.

This sequence belongs to the F420H(2)-dependent quinone reductase family.

Its subcellular location is the cell membrane. It catalyses the reaction oxidized coenzyme F420-(gamma-L-Glu)(n) + a quinol + H(+) = reduced coenzyme F420-(gamma-L-Glu)(n) + a quinone. In terms of biological role, involved in a F420-dependent anti-oxidant mechanism that protects M.tuberculosis against oxidative stress and bactericidal agents. Catalyzes the F420H(2)-dependent two-electron reduction of quinones to dihydroquinones, thereby preventing the formation of cytotoxic semiquinones obtained by the one-electron reduction pathway. In vitro, catalyzes the reduction of menadione to menadiol; since menaquinone is the sole quinone electron carrier in the respiratory chain in M.tuberculosis, the physiological electron acceptor for Fqr-mediated F420H(2) oxidation is therefore likely to be the endogenous menaquinone found in the membrane fraction of M.tuberculosis. The chain is F420H(2)-dependent quinone reductase MT1299 from Mycobacterium tuberculosis (strain CDC 1551 / Oshkosh).